A 608-amino-acid chain; its full sequence is 2',5'-phosphodiesterase 12 (608 aa).

Residues 1–16 (MWRLPGRSALRGVRSV) constitute a mitochondrion transit peptide. The segment covering 90–99 (AAKKSRKNRA) has biased composition (basic residues). Residues 90-111 (AAKKSRKNRAHSSGGAACEATG) form a disordered region. Position 216 is a phosphoserine (Ser-216). Residues Glu-350, Asp-495, and Asn-497 each contribute to the Mg(2+) site. The active-site Proton donor/acceptor is Asp-495.

This sequence belongs to the CCR4/nocturin family. Mg(2+) serves as cofactor.

Its subcellular location is the mitochondrion matrix. The enzyme catalyses Exonucleolytic cleavage of poly(A) to 5'-AMP.. Functionally, enzyme that cleaves 2',5'-phosphodiester bond linking adenosines of the 5'-triphosphorylated oligoadenylates, triphosphorylated oligoadenylates referred as 2-5A modulates the 2-5A system. Degrades triphosphorylated 2-5A to produce AMP and ATP. Also cleaves 3',5'-phosphodiester bond of oligoadenylates. Plays a role as a negative regulator of the 2-5A system that is one of the major pathways for antiviral and antitumor functions induced by interferons (IFNs). Suppression of this enzyme increases cellular 2-5A levels and decreases viral replication in cultured small-airway epithelial cells. The polypeptide is 2',5'-phosphodiesterase 12 (Pde12) (Mus musculus (Mouse)).